A 368-amino-acid chain; its full sequence is Phosphoserine aminotransferase (368 aa).

Residue Arg-44 participates in L-glutamate binding. Pyridoxal 5'-phosphate-binding positions include 78–79, Trp-104, Thr-157, Asp-179, and Gln-202; that span reads AT. Lys-203 bears the N6-(pyridoxal phosphate)lysine mark. 244-245 serves as a coordination point for pyridoxal 5'-phosphate; the sequence is NT.

This sequence belongs to the class-V pyridoxal-phosphate-dependent aminotransferase family. SerC subfamily. As to quaternary structure, homodimer. It depends on pyridoxal 5'-phosphate as a cofactor.

It is found in the cytoplasm. It carries out the reaction O-phospho-L-serine + 2-oxoglutarate = 3-phosphooxypyruvate + L-glutamate. The catalysed reaction is 4-(phosphooxy)-L-threonine + 2-oxoglutarate = (R)-3-hydroxy-2-oxo-4-phosphooxybutanoate + L-glutamate. It functions in the pathway amino-acid biosynthesis; L-serine biosynthesis; L-serine from 3-phospho-D-glycerate: step 2/3. The protein operates within cofactor biosynthesis; pyridoxine 5'-phosphate biosynthesis; pyridoxine 5'-phosphate from D-erythrose 4-phosphate: step 3/5. Functionally, catalyzes the reversible conversion of 3-phosphohydroxypyruvate to phosphoserine and of 3-hydroxy-2-oxo-4-phosphonooxybutanoate to phosphohydroxythreonine. This is Phosphoserine aminotransferase from Neisseria gonorrhoeae (strain ATCC 700825 / FA 1090).